We begin with the raw amino-acid sequence, 524 residues long: DEAD-box ATP-dependent RNA helicase CshA (524 aa).

Residues 1–29 carry the Q motif motif; that stretch reads MKFNELNLSADLLAEIEKAGFVEASPIQE. Residues 32–202 form the Helicase ATP-binding domain; it reads IPLALEGKDV…VQFMKAPEHV (171 aa). 45-52 serves as a coordination point for ATP; that stretch reads AQTGTGKT. The DEAD box signature appears at 150–153; that stretch reads DEAD. In terms of domain architecture, Helicase C-terminal spans 213–373; it reads LVDQYYIRVK…GLKPASVEES (161 aa). Residues 440 to 524 form a disordered region; that stretch reads EKPLPFKPSG…GFVIRNKGDK (85 aa). The span at 463–498 shows a compositional bias: basic and acidic residues; it reads RRGDDRRERDRRGNGRRDEFKKGSRGNDRFDKEKRY.

Belongs to the DEAD box helicase family. CshA subfamily. In terms of assembly, oligomerizes, may be a member of the RNA degradosome.

It is found in the cytoplasm. The catalysed reaction is ATP + H2O = ADP + phosphate + H(+). DEAD-box RNA helicase possibly involved in RNA degradation. Unwinds dsRNA in both 5'- and 3'-directions, has RNA-dependent ATPase activity. The sequence is that of DEAD-box ATP-dependent RNA helicase CshA from Streptococcus pneumoniae serotype 4 (strain ATCC BAA-334 / TIGR4).